The following is an 80-amino-acid chain: Toxin-like peptide AaF1CA1 (80 aa).

The signal sequence occupies residues 1–22; it reads MMKLVLFSVIVILFSLIGSIHG. Positions 25 to 80 constitute an LCN-type CS-alpha/beta domain; the sequence is VPGNYPLRPFRYRYGCAVPGDSDYCVRVCRKHGVRYGYCWFFTCWCEYLEDKNIKI. 3 cysteine pairs are disulfide-bonded: cysteine 40/cysteine 63, cysteine 49/cysteine 68, and cysteine 53/cysteine 70.

The protein belongs to the long (3 C-C) scorpion toxin superfamily. Expressed by the venom gland.

The protein resides in the secreted. Probable ion channel inhibitor. This Androctonus australis (Sahara scorpion) protein is Toxin-like peptide AaF1CA1.